The chain runs to 235 residues: Orotidine 5'-phosphate decarboxylase (235 aa).

Substrate contacts are provided by residues aspartate 10, lysine 33, 60–69 (DLKMNDIPNT), threonine 123, arginine 185, glutamine 194, glycine 214, and arginine 215. Lysine 62 serves as the catalytic Proton donor.

The protein belongs to the OMP decarboxylase family. Type 1 subfamily. Homodimer.

The catalysed reaction is orotidine 5'-phosphate + H(+) = UMP + CO2. Its pathway is pyrimidine metabolism; UMP biosynthesis via de novo pathway; UMP from orotate: step 2/2. Catalyzes the decarboxylation of orotidine 5'-monophosphate (OMP) to uridine 5'-monophosphate (UMP). The protein is Orotidine 5'-phosphate decarboxylase of Lactobacillus johnsonii (strain CNCM I-12250 / La1 / NCC 533).